A 411-amino-acid polypeptide reads, in one-letter code: Alpha-N-acetylgalactosaminidase (411 aa).

The N-terminal stretch at 1 to 17 (MLLKTVLLLGHVAQVLM) is a signal peptide. Disulfide bonds link C38-C80 and C42-C49. Residue 78–79 (DD) coordinates substrate. The N-linked (GlcNAc...) asparagine glycan is linked to N124. Residues C127 and C158 are joined by a disulfide bond. Residue K154 participates in substrate binding. D156 functions as the Nucleophile in the catalytic mechanism. Residue N177 is glycosylated (N-linked (GlcNAc...) asparagine). C187 and C209 are oxidised to a cystine. A substrate-binding site is contributed by S188. N201 is a glycosylation site (N-linked (GlcNAc...) asparagine). 2 residues coordinate substrate: R213 and D217. The active-site Proton donor is the D217. Phosphoserine is present on residues S322 and S332. 2 N-linked (GlcNAc...) asparagine glycosylation sites follow: N359 and N385.

The protein belongs to the glycosyl hydrolase 27 family. Homodimer.

The protein resides in the lysosome. The enzyme catalyses Cleavage of non-reducing alpha-(1-&gt;3)-N-acetylgalactosamine residues from human blood group A and AB mucin glycoproteins, Forssman hapten and blood group A lacto series glycolipids.. It catalyses the reaction a neolactoside IV(3)-alpha-GalNAc,IV(2)-alpha-Fuc-nLc4Cer(d18:1(4E)) + H2O = a neolactoside IV(2)-alpha-Fuc-nLc4Cer(d18:1(4E)) + N-acetyl-alpha-D-galactosamine. The catalysed reaction is a neolactoside IV(3)-alpha-GalNAc,IV(2)-alpha-Fuc-nLc4Cer(d18:0) + H2O = a neolactoside IV(2)-alpha-Fuc-nLc4Cer(d18:0) + N-acetyl-alpha-D-galactosamine. It carries out the reaction a globoside IV3GalNAc-Gb4Cer + H2O = N-acetyl-alpha-D-galactosamine + a globoside Gb4Cer. In terms of biological role, removes terminal alpha-N-acetylgalactosamine residues from glycolipids and glycopeptides. Required for the breakdown of glycolipids. This chain is Alpha-N-acetylgalactosaminidase, found in Homo sapiens (Human).